The following is a 525-amino-acid chain: Chromosomal replication initiator protein DnaA (525 aa).

The domain I, interacts with DnaA modulators stretch occupies residues 1 to 71; sequence MNDFWQHCSA…SDLAREFWNT (71 aa). The segment at 71–188 is domain II; it reads TPIEVQFVLD…GEADSMYERS (118 aa). The interval 160–182 is disordered; sequence AAAGRRTWRPGPGAAPANGGEAD. Residues 169 to 181 are compositionally biased toward low complexity; it reads PGPGAAPANGGEA. A domain III, AAA+ region region spans residues 189-405; the sequence is KLNPVLTFDN…GALRKILAYS (217 aa). ATP contacts are provided by G233, G235, K236, and T237. Residues 406 to 525 are domain IV, binds dsDNA; it reads KFHGREISIE…LHVLEQTLKG (120 aa).

This sequence belongs to the DnaA family. In terms of assembly, oligomerizes as a right-handed, spiral filament on DNA at oriC.

The protein resides in the cytoplasm. In terms of biological role, plays an essential role in the initiation and regulation of chromosomal replication. ATP-DnaA binds to the origin of replication (oriC) to initiate formation of the DNA replication initiation complex once per cell cycle. Binds the DnaA box (a 9 base pair repeat at the origin) and separates the double-stranded (ds)DNA. Forms a right-handed helical filament on oriC DNA; dsDNA binds to the exterior of the filament while single-stranded (ss)DNA is stabiized in the filament's interior. The ATP-DnaA-oriC complex binds and stabilizes one strand of the AT-rich DNA unwinding element (DUE), permitting loading of DNA polymerase. After initiation quickly degrades to an ADP-DnaA complex that is not apt for DNA replication. Binds acidic phospholipids. The polypeptide is Chromosomal replication initiator protein DnaA (Burkholderia orbicola (strain MC0-3)).